The primary structure comprises 117 residues: uncharacterized protein (117 aa).

This is an uncharacterized protein from Microplitis demolitor bracovirus (isolate Webb) (MdBV).